A 424-amino-acid chain; its full sequence is UDP-N-acetylglucosamine 1-carboxyvinyltransferase (424 aa).

Position 22–23 (22–23 (KN)) interacts with phosphoenolpyruvate. UDP-N-acetyl-alpha-D-glucosamine is bound at residue arginine 93. Cysteine 117 functions as the Proton donor in the catalytic mechanism. Cysteine 117 is modified (2-(S-cysteinyl)pyruvic acid O-phosphothioketal). Residues 162-165 (KVSV), aspartate 307, and isoleucine 329 each bind UDP-N-acetyl-alpha-D-glucosamine.

Belongs to the EPSP synthase family. MurA subfamily.

Its subcellular location is the cytoplasm. The enzyme catalyses phosphoenolpyruvate + UDP-N-acetyl-alpha-D-glucosamine = UDP-N-acetyl-3-O-(1-carboxyvinyl)-alpha-D-glucosamine + phosphate. Its pathway is cell wall biogenesis; peptidoglycan biosynthesis. Functionally, cell wall formation. Adds enolpyruvyl to UDP-N-acetylglucosamine. This Actinobacillus pleuropneumoniae serotype 3 (strain JL03) protein is UDP-N-acetylglucosamine 1-carboxyvinyltransferase.